Consider the following 253-residue polypeptide: Endonuclease NucS (253 aa).

It belongs to the NucS endonuclease family.

The protein resides in the cytoplasm. Its function is as follows. Cleaves both 3' and 5' ssDNA extremities of branched DNA structures. This chain is Endonuclease NucS, found in Pyrococcus horikoshii (strain ATCC 700860 / DSM 12428 / JCM 9974 / NBRC 100139 / OT-3).